Reading from the N-terminus, the 275-residue chain is Large ribosomal subunit protein uL2 (275 aa).

Positions 220–275 (QTRGAAMNPVDHPHGGGEGKTGSSGHPVSPWGMPAKGFKTRKKKASDKLIISRRKK) are disordered. A compositionally biased stretch (basic residues) spans 257 to 275 (FKTRKKKASDKLIISRRKK).

The protein belongs to the universal ribosomal protein uL2 family. Part of the 50S ribosomal subunit. Forms a bridge to the 30S subunit in the 70S ribosome.

One of the primary rRNA binding proteins. Required for association of the 30S and 50S subunits to form the 70S ribosome, for tRNA binding and peptide bond formation. It has been suggested to have peptidyltransferase activity; this is somewhat controversial. Makes several contacts with the 16S rRNA in the 70S ribosome. This Wolinella succinogenes (strain ATCC 29543 / DSM 1740 / CCUG 13145 / JCM 31913 / LMG 7466 / NCTC 11488 / FDC 602W) (Vibrio succinogenes) protein is Large ribosomal subunit protein uL2.